Reading from the N-terminus, the 1990-residue chain is Protein TANC2 (1990 aa).

2 disordered regions span residues 1 to 85 (MFRN…SVDE) and 129 to 149 (SPCSTLTSSTASPPASSPCST). A phosphoserine mark is found at serine 169, serine 238, serine 294, and serine 400. Residues 396–442 (IASDSPHASPKHVDANRELPLTQPPSAHSSITSGSCPGTPEMRRRQE) are disordered. The span at 419-431 (PPSAHSSITSGSC) shows a compositional bias: polar residues. ANK repeat units follow at residues 846 to 878 (EGLSMALASLRNLYTPNIKVSRLLILGGANINY), 884 to 913 (NNAPILCVQSHLGYTEMVALLLEFGANVDA), 917 to 946 (SGLTPLGYAAAAGYLSIVVLLCKKRAKVDH), 950 to 979 (NGQCALVHAALRGHLEVVKFLIQCDWTMAG), 990 to 1019 (AIQQALIAAASMGYTEIVSYLLDLPEKDEE), 1033 to 1062 (WGETALTAAAGRGKLEVCRLLLEQGAAVAQ), 1066 to 1095 (RGAVPLFSTVRQGHWQIVDLLLTHGADVNM), 1099 to 1128 (QGRTPLMMAASEGHLGTVDFLLAQGASIAL), 1132 to 1161 (EGLTALSWACLKGHLSVVRSLVDNGAATDH), 1165 to 1194 (NGRTPLDLAAFYGDAEVVQFLVDHGAMIEH), and 1198 to 1227 (SGMRPLDRAVGCRNTSVVVTLLKKGAKIGP). TPR repeat units lie at residues 1244–1277 (LSKLMEEGDMFYKKGKVKEAAQRYQYALKKFPRE), 1291–1324 (VSLLLNLSRCRRKMNDFGMAEEFATKALELKPKS), and 1325–1358 (YEAYYARARAKRSSRQFAAALEDLNEAIKLCPNN). 3 disordered regions span residues 1372-1401 (CRQMQQPQQPPPPPQPQQQLPEEAEPEPQH), 1430-1586 (EARP…KMAQ), and 1692-1718 (LTKEDLPQRPSSAYRGGVRYSQTPQIG). Phosphoserine occurs at positions 1442 and 1458. The span at 1469–1498 (RSSSSVGSPTRQTYQSTSPALSPTHQNSHY) shows a compositional bias: polar residues. Phosphoserine is present on residues serine 1530 and serine 1545. Residues 1553–1572 (VYRSQSGSPVRYQQETSVSQ) are compositionally biased toward polar residues. Asymmetric dimethylarginine occurs at positions 1563 and 1576. Serine 1579 is subject to Phosphoserine. A Phosphoserine modification is found at serine 1722. Over residues 1783–1798 (SPSSNSISSTSNLTPT) the composition is skewed to low complexity. 2 disordered regions span residues 1783–1803 (SPSSNSISSTSNLTPTFRPSS) and 1821–1843 (DELSPVSPTQGGYPSEPTRSRTT). 2 positions are modified to phosphoserine: serine 1824 and serine 1827. Residue asparagine 1928 is glycosylated (N-linked (GlcNAc...) asparagine). Residues 1968–1990 (SRDSRQGQTSPIKPKRPFVESNV) form a disordered region.

Belongs to the TANC family. In terms of assembly, interacts with KIF1A; the interaction decreases in presence of calcium.

The protein resides in the cell projection. Its subcellular location is the dendritic spine. Scaffolding protein in the dendritic spines which acts as immobile postsynaptic posts able to recruit KIF1A-driven dense core vesicles to dendritic spines. The protein is Protein TANC2 (TANC2) of Homo sapiens (Human).